The chain runs to 219 residues: Imidazole glycerol phosphate synthase subunit HisH (219 aa).

A Glutamine amidotransferase type-1 domain is found at 2–218; the sequence is KVVVIDSGTG…MVWTPEGTSG (217 aa). Cys-87 acts as the Nucleophile in catalysis. Active-site residues include His-193 and Glu-195.

Heterodimer of HisH and HisF.

It localises to the cytoplasm. It carries out the reaction 5-[(5-phospho-1-deoxy-D-ribulos-1-ylimino)methylamino]-1-(5-phospho-beta-D-ribosyl)imidazole-4-carboxamide + L-glutamine = D-erythro-1-(imidazol-4-yl)glycerol 3-phosphate + 5-amino-1-(5-phospho-beta-D-ribosyl)imidazole-4-carboxamide + L-glutamate + H(+). It catalyses the reaction L-glutamine + H2O = L-glutamate + NH4(+). Its pathway is amino-acid biosynthesis; L-histidine biosynthesis; L-histidine from 5-phospho-alpha-D-ribose 1-diphosphate: step 5/9. In terms of biological role, IGPS catalyzes the conversion of PRFAR and glutamine to IGP, AICAR and glutamate. The HisH subunit catalyzes the hydrolysis of glutamine to glutamate and ammonia as part of the synthesis of IGP and AICAR. The resulting ammonia molecule is channeled to the active site of HisF. The sequence is that of Imidazole glycerol phosphate synthase subunit HisH from Granulibacter bethesdensis (strain ATCC BAA-1260 / CGDNIH1).